Here is a 542-residue protein sequence, read N- to C-terminus: Major facilitator superfamily domain-containing protein 6-like (542 aa).

A run of 11 helical transmembrane segments spans residues 46-66 (LGLS…LALL), 89-109 (LLSS…GILV), 198-218 (MFFL…PLEW), 246-266 (VGAA…FCRI), 272-292 (FYSY…LPIY), 321-341 (VTVI…LWLM), 352-372 (GICL…AGPL), 381-401 (WMLV…SFLW), 404-424 (WAVM…WWSV), 444-464 (FEAF…GFVV), and 469-489 (VNVL…ALAV).

The protein belongs to the major facilitator superfamily. MFSD6 family.

The protein localises to the membrane. The polypeptide is Major facilitator superfamily domain-containing protein 6-like (mfsd6l) (Danio rerio (Zebrafish)).